The chain runs to 459 residues: Argininosuccinate lyase (459 aa).

This sequence belongs to the lyase 1 family. Argininosuccinate lyase subfamily.

It is found in the cytoplasm. The enzyme catalyses 2-(N(omega)-L-arginino)succinate = fumarate + L-arginine. Its pathway is amino-acid biosynthesis; L-arginine biosynthesis; L-arginine from L-ornithine and carbamoyl phosphate: step 3/3. This Prochlorococcus marinus (strain AS9601) protein is Argininosuccinate lyase.